The sequence spans 204 residues: Large ribosomal subunit protein eL15 (204 aa).

Belongs to the eukaryotic ribosomal protein eL15 family. Component of the large ribosomal subunit.

It is found in the cytoplasm. In terms of biological role, component of the large ribosomal subunit. The ribosome is a large ribonucleoprotein complex responsible for the synthesis of proteins in the cell. In Hypophthalmichthys molitrix (Silver carp), this protein is Large ribosomal subunit protein eL15 (rpl15).